Reading from the N-terminus, the 239-residue chain is Phospholipase A2 (239 aa).

An N-terminal signal peptide occupies residues 1-19; the sequence is MSLIIVLVISVLSADAVLS. Residues 20–105 constitute a propeptide that is removed on maturation; the sequence is MDNELYLNLE…GRCLSVGESE (86 aa). 3 residues coordinate Ca(2+): W113, G115, and G117. 5 cysteine pairs are disulfide-bonded: C114-C136, C135-C174, C142-C167, C165-C202, and C207-C217. Residue H139 is part of the active site. D140 provides a ligand contact to Ca(2+). A propeptide spanning residues 211-213 is cleaved from the precursor; sequence RSP.

This sequence belongs to the phospholipase A2 family. Group III subfamily. Heterodimer composed of a small subunit and a large subunit; disulfid-linked. Requires Ca(2+) as cofactor. As to expression, expressed by the venom gland.

Its subcellular location is the secreted. The enzyme catalyses a 1,2-diacyl-sn-glycero-3-phosphocholine + H2O = a 1-acyl-sn-glycero-3-phosphocholine + a fatty acid + H(+). Functionally, toxic phospholipase A2, which may catalyze the calcium-dependent hydrolysis of the 2-acyl groups in 3-sn-phosphoglycerides. Inhibits both skeletal (RYR1) and cardiac (RYR2) ryanodine receptors (calcium release channels). Probably blocks ryanodine receptors by generating a lipid product. This is Phospholipase A2 from Hoffmannihadrurus gertschi (Scorpion).